We begin with the raw amino-acid sequence, 750 residues long: MAHRKRQSTASSMLDHRARPGPIPHDQEPESEDTELPLESYVPTGLELGTLRPESPTPEEQECHNHSPDGDSSSDYVNNTSEEEDYDEGLPEEEEGVTYYIRYCPEDDSYLEGMDCNGEEYIAHGAHPVDTDECQEAVEDWTDSVGPHTHSHGAENSQEYPDGHLPIPEDDPTVLEVHDQEEDGHYCSSKESYQDYYPPETNGNTGGASPYRMRRGDGDLEEQEEDIDQIVAEIKMSLSMTSITSASEASPEHMPELDPGDSTEACPPSDTGHGPGRQEARPKSLNLPPEVKHPGDLQRGLKTKTRTPEERPKWPQEQVCNGLEQPRKQQRSDLNGPTDNNNIPETKKVASFPSFVAVPGPCEAEDLIDGIIFAANYLGSTQLLSERNPSKNIRMMQAQEAVSRVKRMQKAAKIKKKANSEGDAQTLTEVDLFISTQRIKVLNADTQETMMDHALRTISYIADIGNIVVLMARRRMPRSASQDCIETTPGAQEGKKQYKMICHVFESEDAQLIAQSIGQAFSVAYQEFLRANGINPEDLSQKEYSDIINTQEMYNDDLIHFSNSENCKELQLEKHKGEILGVVVVESGWGSILPTVILANMMNGGPAARSGKLSIGDQIMSINGTSLVGLPLATCQGIIKGLKNQTQVKLNIVSCPPVTTVLIKRPDLKYQLGFSVQNGIICSLMRGGIAERGGVRVGHRIIEINGQSVVATAHEKIVQALSNSVGEIHMKTMPAAMFRLLTGQETPLYI.

2 disordered regions span residues methionine 1–glutamate 94 and aspartate 143–threonine 346. Position 11 is a phosphoserine (serine 11). The span at glycine 70 to threonine 80 shows a compositional bias: polar residues. Acidic residues predominate over residues serine 81–glutamate 94. Residues histidine 185–threonine 271 form an STXBP1-binding region. Position 209 is a phosphoserine (serine 209). Over residues aspartate 219–aspartate 228 the composition is skewed to acidic residues. Polar residues-rich tracts occupy residues leucine 238–glutamate 248 and serine 332–proline 344. Residues leucine 367–aspartate 556 form the PID domain. PDZ domains follow at residues glutamate 569–serine 654 and threonine 660–alanine 736.

Part of a multimeric complex containing STXBP1 and syntaxin-1. Binds to the cytoplasmic domain of amyloid-beta protein, and to the nuclear factor NF-kappa-B/p65 via its PDZ domain. Interacts with the N-terminal domain of NECAB3. In terms of tissue distribution, specifically expressed in neurons, predominantly of the cerebellum, hippocampus, and spinal cord. Lesser extent in neurons of the cerebral cortex and anterior thalmic nuclei.

Its function is as follows. Putative function in synaptic vesicle exocytosis by binding to STXBP1, an essential component of the synaptic vesicle exocytotic machinery. May modulate processing of the amyloid-beta precursor protein (APP) and hence formation of APP-beta. In Mus musculus (Mouse), this protein is Amyloid-beta A4 precursor protein-binding family A member 2 (Apba2).